Reading from the N-terminus, the 296-residue chain is MLYEQIQSNKRRTVFLLIGFLALVGIVGAAVGYLLLKSLVTGIIGALLVGVIYAVIMISNATDVVMAMNHGTEVTSADQAPELWHTVEDMAMVAQVPMPRVFIIEDESPNAFATGNNPKNAAVAATTGLIALMNRNELEGVIGHEISHVRNYDIRISTIALALTAAISFLINLGSNWWLFGSGSRDRDNRDSGGGGQLLVFILSLVVMIFAPLVAAVIQMAISRNREYLADAGSVALTRNPQELIAALRKLNSAPPMSHVDESSAALYISDPLKKKARLFDTHPPIEERIARLEKM.

Transmembrane regions (helical) follow at residues 14–34 (VFLLIGFLALVGIVGAAVGYL) and 38–58 (SLVTGIIGALLVGVIYAVIMI). Residue His144 coordinates Zn(2+). Residue Glu145 is part of the active site. Residue His148 participates in Zn(2+) binding. A run of 2 helical transmembrane segments spans residues 159–179 (IALALTAAISFLINLGSNWWL) and 198–218 (LLVFILSLVVMIFAPLVAAVI). Residue Glu227 participates in Zn(2+) binding.

The protein belongs to the peptidase M48B family. Zn(2+) serves as cofactor.

The protein localises to the cell membrane. The protein is Protease HtpX homolog of Leuconostoc citreum (strain KM20).